The primary structure comprises 115 residues: Cholecystokinin (115 aa).

Residues 1-20 (MKSGVCLCVVMAVLAAGALA) form the signal peptide. Positions 21 to 70 (QPVVPAEATDPVEQRAQEAPRRQLRAVLRTDGEPRARLGALLARYIQQVR) are excised as a propeptide. Residue Y97 is modified to Sulfotyrosine. F103 carries the phenylalanine amide modification. Positions 107-115 (SAEDYEYPS) are excised as a propeptide. Residues Y111 and Y113 each carry the sulfotyrosine modification.

It belongs to the gastrin/cholecystokinin family. In terms of assembly, binds to CCK-A receptors in the pancreas and CCK-B receptors in the brain. In terms of processing, the precursor is cleaved by proteases to produce a number of active cholecystokinins. In terms of tissue distribution, expressed and secreted by discrete enteroendocrine cells that reside as single cells scattered among enterocytes in the mucosa of the small intestine. Released into the blood following ingestion of a meal.

The protein localises to the secreted. In terms of biological role, this peptide hormone induces gall bladder contraction and the release of pancreatic enzymes in the gut. Its function in the brain is not clear. Binding to CCK-A receptors stimulates amylase release from the pancreas, binding to CCK-B receptors stimulates gastric acid secretion. The chain is Cholecystokinin (Cck) from Mus musculus (Mouse).